We begin with the raw amino-acid sequence, 172 residues long: Peptide deformylase (172 aa).

Fe cation is bound by residues cysteine 92 and histidine 134. The active site involves glutamate 135. A Fe cation-binding site is contributed by histidine 138.

It belongs to the polypeptide deformylase family. The cofactor is Fe(2+).

The catalysed reaction is N-terminal N-formyl-L-methionyl-[peptide] + H2O = N-terminal L-methionyl-[peptide] + formate. In terms of biological role, removes the formyl group from the N-terminal Met of newly synthesized proteins. Requires at least a dipeptide for an efficient rate of reaction. N-terminal L-methionine is a prerequisite for activity but the enzyme has broad specificity at other positions. This is Peptide deformylase from Saccharophagus degradans (strain 2-40 / ATCC 43961 / DSM 17024).